The sequence spans 107 residues: YcgL domain-containing protein Psyc_0800 (107 aa).

The YcgL domain maps to 1-95 (MHCDIYKFLK…QDVMRRQAEL (95 aa)).

The polypeptide is YcgL domain-containing protein Psyc_0800 (Psychrobacter arcticus (strain DSM 17307 / VKM B-2377 / 273-4)).